Here is a 326-residue protein sequence, read N- to C-terminus: Vitamin B12 import system permease protein BtuC (326 aa).

A run of 9 helical transmembrane segments spans residues 15–35 (WLLC…CAGE), 61–81 (LAVL…QALF), 88–108 (PGLL…VLLG), 112–132 (LPNW…TLIL), 146–166 (LLAG…AIYF), 184–204 (GGVD…LLWI), 240–260 (GWMV…GLVI), 274–294 (VLLP…DVVA), and 302–322 (ELPI…WLLL).

This sequence belongs to the binding-protein-dependent transport system permease family. FecCD subfamily. In terms of assembly, the complex is composed of two ATP-binding proteins (BtuD), two transmembrane proteins (BtuC) and a solute-binding protein (BtuF).

It is found in the cell inner membrane. Functionally, part of the ABC transporter complex BtuCDF involved in vitamin B12 import. Involved in the translocation of the substrate across the membrane. The polypeptide is Vitamin B12 import system permease protein BtuC (Escherichia coli O17:K52:H18 (strain UMN026 / ExPEC)).